A 140-amino-acid chain; its full sequence is Ribonuclease P protein subunit p20 (140 aa).

Belongs to the histone-like Alba family. In terms of assembly, component of nuclear RNase P and RNase MRP complexes. RNase P consists of a catalytic RNA moiety and 10 different protein chains; POP1, POP4, POP5, POP7, RPP14, RPP21, RPP25, RPP30, RPP38 and RPP40. Within the RNase P complex, POP1, POP7 and RPP25 form the 'finger' subcomplex, POP5, RPP14, RPP40 and homodimeric RPP30 form the 'palm' subcomplex, and RPP21, POP4 and RPP38 form the 'wrist' subcomplex. All subunits of the RNase P complex interact with the catalytic RNA. Several subunits of RNase P are also part of the RNase MRP complex. RNase MRP consists of a catalytic RNA moiety and about 8 protein subunits; POP1, POP7, RPP25, RPP30, RPP38, RPP40 and possibly also POP4 and POP5. Interacts with SMN1. POP7 forms a heterodimer with RPP25 that binds to the P3 stem loop of the catalytic RNA.

Its subcellular location is the nucleus. The protein localises to the nucleolus. It is found in the cytoplasm. It localises to the cytoplasmic granule. In terms of biological role, component of ribonuclease P, a ribonucleoprotein complex that generates mature tRNA molecules by cleaving their 5'-ends. Also a component of the MRP ribonuclease complex, which cleaves pre-rRNA sequences. The chain is Ribonuclease P protein subunit p20 (POP7) from Homo sapiens (Human).